A 674-amino-acid polypeptide reads, in one-letter code: Fidgetin-like protein 1 (674 aa).

Positions 157–179 (SQESDSLPNSAHDRDRTQDFPES) are disordered. Positions 167–179 (AHDRDRTQDFPES) are enriched in basic and acidic residues. Residue Lys225 forms a Glycyl lysine isopeptide (Lys-Gly) (interchain with G-Cter in SUMO2) linkage. Residue Ser259 is modified to Phosphoserine. Positions 295 to 344 (FKTAKEQLWVDQQKKYHQPQRASGSSYGGVKKSLGASRSRGILGKFVPPI) are necessary and sufficient for interaction with RAD51. At Lys339 the chain carries N6-acetyllysine. ATP-binding positions include Ala404 and 444 to 449 (GTGKTL).

The protein belongs to the AAA ATPase family. Hexamer. Interacts (via N-terminal one-half region) with RAD51; the interaction is direct. Interacts (via N-terminal one-half region) with SPIDR (via the C-terminal region); the interaction is direct. Interacts with FIRRM; may regulate homologous recombination. It depends on Mg(2+) as a cofactor.

It is found in the nucleus. The protein resides in the cytoplasm. Its subcellular location is the perinuclear region. It catalyses the reaction ATP + H2O = ADP + phosphate + H(+). In terms of biological role, involved in DNA double-strand break (DBS) repair via homologous recombination (HR). Recruited at DSB sites independently of BRCA2, RAD51 and RAD51 paralogs in a H2AX-dependent manner. May regulate osteoblast proliferation and differentiation. May play a role in the control of male meiosis dynamic. The sequence is that of Fidgetin-like protein 1 (FIGNL1) from Homo sapiens (Human).